A 26-amino-acid chain; its full sequence is uncharacterized protein (26 aa).

Phosphorylated by YfhK.

Probable member of a two-component regulatory system YfhA/YfhK. This is an uncharacterized protein from Klebsiella oxytoca.